The following is a 104-amino-acid chain: L-rhamnose mutarotase (104 aa).

Y18 lines the substrate pocket. H22 (proton donor) is an active-site residue. Substrate-binding positions include Y41 and 76–77; that span reads WW.

This sequence belongs to the rhamnose mutarotase family. As to quaternary structure, homodimer.

It is found in the cytoplasm. The enzyme catalyses alpha-L-rhamnose = beta-L-rhamnose. The protein operates within carbohydrate metabolism; L-rhamnose metabolism. Involved in the anomeric conversion of L-rhamnose. The chain is L-rhamnose mutarotase from Cronobacter sakazakii (strain ATCC BAA-894) (Enterobacter sakazakii).